The sequence spans 143 residues: Histone H2A.z (143 aa).

This sequence belongs to the histone H2A family. The nucleosome is a histone octamer containing two molecules each of H2A, H2B, H3 and H4 assembled in one H3-H4 heterotetramer and two H2A-H2B heterodimers. The octamer wraps approximately 147 bp of DNA.

The protein resides in the nucleus. Its subcellular location is the chromosome. Its function is as follows. Core component of nucleosome which plays a central role in DNA double strand break (DSB) repair. Nucleosomes wrap and compact DNA into chromatin, limiting DNA accessibility to the cellular machineries which require DNA as a template. Histones thereby play a central role in transcription regulation, DNA repair, DNA replication and chromosomal stability. DNA accessibility is regulated via a complex set of post-translational modifications of histones, also called histone code, and nucleosome remodeling. The chain is Histone H2A.z (H2AZ) from Dictyostelium discoideum (Social amoeba).